Consider the following 311-residue polypeptide: MKNFSIKITRIAITLILVLLGIIAIFKAWVFYTESPWTRDAKFTADVVAIAPDVTGLLTDVPLVDNQLVKKGQVLLVIDQPRYQQALAEANADVAYYQTLAAEKRREAGRRVRLGVQAMSQEEIDQANNVLQTVEHQLAKAVATRELAKLDLERTTVRAPADGWITNLNVHAGEYITRGSVAVALVKKNSFYILAYLEETKLNGLNKGDRAEITPLGSNRIMHGTVDSVAAAVNNSSSTVNSKGLASIDSNLEWVRLAQRVPVKILLDDKDQLHPYPAGTTATVVITGKNDRATDSGSPFVRLMHRLREFG.

The chain crosses the membrane as a helical span at residues Ile11–Phe31.

It belongs to the membrane fusion protein (MFP) (TC 8.A.1) family.

Its subcellular location is the cell inner membrane. Its function is as follows. Forms an efflux pump with AaeB. The polypeptide is p-hydroxybenzoic acid efflux pump subunit AaeA (Serratia proteamaculans (strain 568)).